A 471-amino-acid polypeptide reads, in one-letter code: V-type ATP synthase beta chain (471 aa).

It belongs to the ATPase alpha/beta chains family.

Functionally, produces ATP from ADP in the presence of a proton gradient across the membrane. The V-type beta chain is a regulatory subunit. The sequence is that of V-type ATP synthase beta chain from Deinococcus deserti (strain DSM 17065 / CIP 109153 / LMG 22923 / VCD115).